The following is a 364-amino-acid chain: GDP-fucose transporter 1 (364 aa).

8 helical membrane passes run 34–56 (FVLRALQIALVVSLYWVTSISMV), 76–98 (VTFYQCLVTVLLCKGLSSLATCC), 111–130 (LKVARSVLPLSVVFIGMITF), 140–162 (VAFYNVGRSLTTVFNVLLSYLLL), 167–185 (SFYALLTCSVIIGGFWLGV), 195–214 (SWTGTLFGVLASLCVSLNAI), 227–249 (IWRLTFYNNANACVLFLPLLLAL), and 264–286 (AHFWAMMTLGGLFGFAIGYVTGL). The interval 345–364 (MKKTQEEPHPRENEKSNMEV) is disordered.

The protein belongs to the TPT transporter family. SLC35C subfamily.

The protein localises to the golgi apparatus membrane. The catalysed reaction is GMP(out) + GDP-beta-L-fucose(in) = GMP(in) + GDP-beta-L-fucose(out). Its function is as follows. Antiporter specific for GDP-l-fucose and depending on the concomitant reverse transport of GMP. Involved in GDP-fucose import from the cytoplasm into the Golgi lumen. This Bos taurus (Bovine) protein is GDP-fucose transporter 1 (SLC35C1).